The chain runs to 309 residues: tRNA dimethylallyltransferase (309 aa).

Gly13–Ser20 serves as a coordination point for ATP. Residue Thr15–Ser20 participates in substrate binding.

This sequence belongs to the IPP transferase family. Monomer. The cofactor is Mg(2+).

The enzyme catalyses adenosine(37) in tRNA + dimethylallyl diphosphate = N(6)-dimethylallyladenosine(37) in tRNA + diphosphate. Its function is as follows. Catalyzes the transfer of a dimethylallyl group onto the adenine at position 37 in tRNAs that read codons beginning with uridine, leading to the formation of N6-(dimethylallyl)adenosine (i(6)A). This is tRNA dimethylallyltransferase from Lacticaseibacillus paracasei (strain ATCC 334 / BCRC 17002 / CCUG 31169 / CIP 107868 / KCTC 3260 / NRRL B-441) (Lactobacillus paracasei).